The sequence spans 374 residues: Biotin synthase (374 aa).

In terms of domain architecture, Radical SAM core spans 49-276; the sequence is NEVQVSTLLS…KSHVRLSAGR (228 aa). [4Fe-4S] cluster is bound by residues Cys64, Cys68, and Cys71. Cys108, Cys139, Cys199, and Arg271 together coordinate [2Fe-2S] cluster. Residues 344–374 are disordered; that stretch reads QQQEQAEGSNDLFIDATKPKVAAKQQHATEA.

Belongs to the radical SAM superfamily. Biotin synthase family. As to quaternary structure, homodimer. The cofactor is [4Fe-4S] cluster. [2Fe-2S] cluster is required as a cofactor.

It carries out the reaction (4R,5S)-dethiobiotin + (sulfur carrier)-SH + 2 reduced [2Fe-2S]-[ferredoxin] + 2 S-adenosyl-L-methionine = (sulfur carrier)-H + biotin + 2 5'-deoxyadenosine + 2 L-methionine + 2 oxidized [2Fe-2S]-[ferredoxin]. The protein operates within cofactor biosynthesis; biotin biosynthesis; biotin from 7,8-diaminononanoate: step 2/2. In terms of biological role, catalyzes the conversion of dethiobiotin (DTB) to biotin by the insertion of a sulfur atom into dethiobiotin via a radical-based mechanism. This chain is Biotin synthase, found in Alteromonas mediterranea (strain DSM 17117 / CIP 110805 / LMG 28347 / Deep ecotype).